The sequence spans 360 residues: Peptide chain release factor 1 (360 aa).

Gln235 carries the post-translational modification N5-methylglutamine. A compositionally biased stretch (basic and acidic residues) spans 284–293; the sequence is HKRQQEEAST. The interval 284–305 is disordered; that stretch reads HKRQQEEASTRRNLLGSGDRSD.

Belongs to the prokaryotic/mitochondrial release factor family. Post-translationally, methylated by PrmC. Methylation increases the termination efficiency of RF1.

It localises to the cytoplasm. Peptide chain release factor 1 directs the termination of translation in response to the peptide chain termination codons UAG and UAA. In Pectobacterium atrosepticum (strain SCRI 1043 / ATCC BAA-672) (Erwinia carotovora subsp. atroseptica), this protein is Peptide chain release factor 1.